We begin with the raw amino-acid sequence, 110 residues long: Large ribosomal subunit protein uL22 (110 aa).

It belongs to the universal ribosomal protein uL22 family. Part of the 50S ribosomal subunit.

Its function is as follows. This protein binds specifically to 23S rRNA; its binding is stimulated by other ribosomal proteins, e.g. L4, L17, and L20. It is important during the early stages of 50S assembly. It makes multiple contacts with different domains of the 23S rRNA in the assembled 50S subunit and ribosome. The globular domain of the protein is located near the polypeptide exit tunnel on the outside of the subunit, while an extended beta-hairpin is found that lines the wall of the exit tunnel in the center of the 70S ribosome. This chain is Large ribosomal subunit protein uL22, found in Photobacterium profundum (strain SS9).